We begin with the raw amino-acid sequence, 493 residues long: Transcript termination protein A18 (493 aa).

Residues 100–256 (MIESKRPLYI…NSIINIAKLS (157 aa)) enclose the Helicase ATP-binding domain. 113-120 (LACGFGKT) provides a ligand contact to ATP. Residues 206 to 209 (DESH) carry the DESH box motif.

This sequence belongs to the helicase family. Poxviruses subfamily. As to quaternary structure, interacts with G2. Might be part of a transcription complex composed at least of G2, A18, and H5.

Its subcellular location is the virion. Functionally, DNA helicase which seems to act as a postreplicative transcription termination factor. Involved in ATP-dependent release of nascent RNA. Forms a stable complex with single-stranded DNA, and to a lesser extent RNA. This Vaccinia virus (strain Tian Tan) (VACV) protein is Transcript termination protein A18.